Consider the following 638-residue polypeptide: Chaperone protein DnaK (638 aa).

At T197 the chain carries Phosphothreonine; by autocatalysis. Positions 600 to 638 are disordered; it reads SGAQGGAQAGPGAGAGQQANQGSSNNKEDIQDADFEEVK. Residues 602–614 are compositionally biased toward gly residues; it reads AQGGAQAGPGAGA. Positions 615-624 are enriched in low complexity; sequence GQQANQGSSN. The segment covering 625 to 638 has biased composition (basic and acidic residues); it reads NKEDIQDADFEEVK.

It belongs to the heat shock protein 70 family.

Functionally, acts as a chaperone. In Phocaeicola vulgatus (strain ATCC 8482 / DSM 1447 / JCM 5826 / CCUG 4940 / NBRC 14291 / NCTC 11154) (Bacteroides vulgatus), this protein is Chaperone protein DnaK.